Reading from the N-terminus, the 169-residue chain is Lipoprotein signal peptidase (169 aa).

The next 4 helical transmembrane spans lie at 10 to 30 (LPWL…KAFF), 41 to 61 (VVIP…AFSF), 68 to 88 (WQRW…VVWL), and 94 to 114 (GETW…GNLY). Residues Asp-124 and Asp-143 contribute to the active site. A helical membrane pass occupies residues 135–155 (YFPAFNLADSAITVGAVMLAL).

The protein belongs to the peptidase A8 family.

Its subcellular location is the cell inner membrane. It carries out the reaction Release of signal peptides from bacterial membrane prolipoproteins. Hydrolyzes -Xaa-Yaa-Zaa-|-(S,diacylglyceryl)Cys-, in which Xaa is hydrophobic (preferably Leu), and Yaa (Ala or Ser) and Zaa (Gly or Ala) have small, neutral side chains.. The protein operates within protein modification; lipoprotein biosynthesis (signal peptide cleavage). Functionally, this protein specifically catalyzes the removal of signal peptides from prolipoproteins. The polypeptide is Lipoprotein signal peptidase (Pseudomonas paraeruginosa (strain DSM 24068 / PA7) (Pseudomonas aeruginosa (strain PA7))).